The following is a 299-amino-acid chain: ATP synthase gamma chain (299 aa).

The protein belongs to the ATPase gamma chain family. In terms of assembly, F-type ATPases have 2 components, CF(1) - the catalytic core - and CF(0) - the membrane proton channel. CF(1) has five subunits: alpha(3), beta(3), gamma(1), delta(1), epsilon(1). CF(0) has three main subunits: a, b and c.

It localises to the cell membrane. Its function is as follows. Produces ATP from ADP in the presence of a proton gradient across the membrane. The gamma chain is believed to be important in regulating ATPase activity and the flow of protons through the CF(0) complex. This is ATP synthase gamma chain from Clavibacter michiganensis subsp. michiganensis (strain NCPPB 382).